The primary structure comprises 209 residues: Ribosomal RNA large subunit methyltransferase E (209 aa).

Residues Gly60, Trp62, Asp80, Asp96, and Asp121 each coordinate S-adenosyl-L-methionine. The active-site Proton acceptor is Lys161. A compositionally biased stretch (basic and acidic residues) spans 182 to 196 (VQMRKPSSSRDRSRE). Positions 182–209 (VQMRKPSSSRDRSREQYLLGRGFRGRSE) are disordered.

This sequence belongs to the class I-like SAM-binding methyltransferase superfamily. RNA methyltransferase RlmE family.

The protein localises to the cytoplasm. It catalyses the reaction uridine(2552) in 23S rRNA + S-adenosyl-L-methionine = 2'-O-methyluridine(2552) in 23S rRNA + S-adenosyl-L-homocysteine + H(+). Functionally, specifically methylates the uridine in position 2552 of 23S rRNA at the 2'-O position of the ribose in the fully assembled 50S ribosomal subunit. This chain is Ribosomal RNA large subunit methyltransferase E, found in Pseudomonas fluorescens (strain ATCC BAA-477 / NRRL B-23932 / Pf-5).